A 201-amino-acid chain; its full sequence is Potassium-transporting ATPase KdpC subunit (201 aa).

A helical transmembrane segment spans residues 7-27 (PALVLLVALTAITGLAYPLAV).

Belongs to the KdpC family. The system is composed of three essential subunits: KdpA, KdpB and KdpC.

The protein resides in the cell inner membrane. Functionally, part of the high-affinity ATP-driven potassium transport (or Kdp) system, which catalyzes the hydrolysis of ATP coupled with the electrogenic transport of potassium into the cytoplasm. This subunit acts as a catalytic chaperone that increases the ATP-binding affinity of the ATP-hydrolyzing subunit KdpB by the formation of a transient KdpB/KdpC/ATP ternary complex. This chain is Potassium-transporting ATPase KdpC subunit, found in Methylorubrum extorquens (strain CM4 / NCIMB 13688) (Methylobacterium extorquens).